Consider the following 187-residue polypeptide: MRMNHMEMHHMGMNHTDDNITMPPHQHPTTSASHSHEMMMPMTFYFGFKNVDLLFSSLVINTPGEMAGAFVAVFLLAMFYEGLKIAREGLLRKSQVSIRYNSMPVPGPNGTILMETHKTVGQQMLSFPHLLQTVLHIIQVVISYFLMLIFMTYNGYLCIAVAAGAGTGYFLFSWKKAVVVDITEHCH.

Topologically, residues 1–65 (MRMNHMEMHH…SSLVINTPGE (65 aa)) are extracellular. The Bis-His motif signature appears at 9-10 (HH). Asparagine 19 carries an N-linked (GlcNAc...) asparagine glycan. Threonine 30 is a glycosylation site (O-linked (GalNAc...) threonine). Residues 66 to 86 (MAGAFVAVFLLAMFYEGLKIA) form a helical membrane-spanning segment. Residues 87–129 (REGLLRKSQVSIRYNSMPVPGPNGTILMETHKTVGQQMLSFPH) are Cytoplasmic-facing. The residue at position 111 (threonine 111) is a Phosphothreonine. The chain crosses the membrane as a helical span at residues 130–150 (LLQTVLHIIQVVISYFLMLIF). The Extracellular portion of the chain corresponds to 151–153 (MTY). Residues 154–174 (NGYLCIAVAAGAGTGYFLFSW) form a helical membrane-spanning segment. The Cytoplasmic segment spans residues 175–187 (KKAVVVDITEHCH). At cysteine 186 the chain carries Cysteine sulfenic acid (-SOH).

The protein belongs to the copper transporter (Ctr) (TC 1.A.56) family. SLC31A subfamily. Homotrimer; is stabilized by cisplatin via interactions between cisplatin and the methionine-rich clusters, and could be crucial for the copper(2+) reduction process and copper(1+) stabilization. Heterotrimer between SLC31A1, CCS and SOD1; this heterotrimer is copper(1+)-mediated and its maintenance is regulated through SOD1 activation. Interacts with KDR; this interaction is induced upon VEGFA stimulation leading to SLC31A1 and KDR subsequent co-internalization to early endosomes, thereby activating KDR downstream signaling in endothelial cells. Interacts (via C-terminal domain) with ATOX1 (via dimer form); this interaction improves ATOX1 stability and controls intracellular copper(1+) levels. Interacts with SLC31A2; this interaction stabilizes SLC31A2 and protects its from ubiquitination and degradation. Interacts (via C-terminal domain) with CCS; this interaction is copper(1+)-mediated. In terms of processing, O-Glycosylation at Thr-30 protects from proteolytic cleavage in the N-terminal extracellular domain. Post-translationally, proteolytic cleavage, leading to a truncated form, is facilitated by SLC31A2 and initiated preferentially by CTSL and to a minor extend by CTSB in endolysosomal compartments. A post-CTSL/cathepsin L processing occurs to yield to the fully truncated form. Sulfenylated at Cys-186 after stimulation with VEGFA, which induces SLC31A1-KDR disulfide bond formation and their co-internalization to early endosomes, driving to a sustained VEGFR2 signaling.

The protein resides in the cell membrane. It is found in the early endosome membrane. The protein localises to the recycling endosome membrane. It localises to the apical cell membrane. Its subcellular location is the late endosome membrane. The protein resides in the basolateral cell membrane. The enzyme catalyses Cu(+)(out) = Cu(+)(in). It carries out the reaction Ag(+)(out) = Ag(+)(in). With respect to regulation, copper uptake is inhibited by cold temperature, silver and zinc ions. Platinum-containing chemotherapeutic agents uptake is inhibited by cold temperature and copper. Its function is as follows. Uniporter that mediates the transport of copper(1+) from the extracellular space to the cytoplasm, across the plasma membrane. Then, delivers directly copper(1+) to specific chaperone such as ATOX1, via a copper(1+)- mediated transient interaction between the C-terminal domain and a copper(1+) chaperone, thus controlling intracellular copper(1+) levels. May function in copper(1+) import from the apical membrane thus may drive intestinal copper absorption. The copper(1+) transport mechanism is sodium-independent, saturable and of high-affinity. Also mediates the uptake of silver(1+). May function in the influx of the platinum-containing chemotherapeutic agents. The platinum-containing chemotherapeutic agents uptake is saturable. Also participates in the first step of copper(2+) acquisition by cells through a direct transfer of copper(2+) from copper(2+) carriers in blood, such as ALB to the N-terminal domain of SLC31A1, leading to copper(2+) reduction and probably followed by copper(1+) stabilization. In addition, functions as a redox sensor to promote angiogenesis in endothelial cells, in a copper(1+) transport independent manner, by transmitting the VEGF-induced ROS signal through a sulfenylation at Cys-189 leading to a subsequent disulfide bond formation between SLC31A1 and KDR. The SLC31A1-KDR complex is then co-internalized to early endosomes, driving a sustained VEGFR2 signaling. Functionally, mobilizes copper(1+) out of the endosomal compartment, making copper(1+) available for export out of the cells. This is High affinity copper uptake protein 1 from Rattus norvegicus (Rat).